Consider the following 429-residue polypeptide: 3-phosphoshikimate 1-carboxyvinyltransferase (429 aa).

3-phosphoshikimate-binding residues include Lys23, Ser24, and Arg28. Position 23 (Lys23) interacts with phosphoenolpyruvate. Residues Gly94 and Arg126 each contribute to the phosphoenolpyruvate site. Residues Ser171, Ser172, Gln173, Ser199, Asp316, Asn339, and Lys343 each contribute to the 3-phosphoshikimate site. Gln173 contributes to the phosphoenolpyruvate binding site. The Proton acceptor role is filled by Asp316. Phosphoenolpyruvate is bound by residues Arg347, Arg389, and Lys414.

The protein belongs to the EPSP synthase family. Monomer.

It localises to the cytoplasm. It catalyses the reaction 3-phosphoshikimate + phosphoenolpyruvate = 5-O-(1-carboxyvinyl)-3-phosphoshikimate + phosphate. Its pathway is metabolic intermediate biosynthesis; chorismate biosynthesis; chorismate from D-erythrose 4-phosphate and phosphoenolpyruvate: step 6/7. Catalyzes the transfer of the enolpyruvyl moiety of phosphoenolpyruvate (PEP) to the 5-hydroxyl of shikimate-3-phosphate (S3P) to produce enolpyruvyl shikimate-3-phosphate and inorganic phosphate. The protein is 3-phosphoshikimate 1-carboxyvinyltransferase of Idiomarina loihiensis (strain ATCC BAA-735 / DSM 15497 / L2-TR).